The sequence spans 281 residues: Src-like-adapter (281 aa).

The disordered stretch occupies residues 1-20; sequence MGNSMKSTSPPSERPLSSSE. The N-myristoyl glycine moiety is linked to residue Gly2. Residues 7 to 20 show a composition bias toward low complexity; the sequence is STSPPSERPLSSSE. The 61-residue stretch at 22-82 folds into the SH3 domain; sequence LESDFLAVLT…PGICVARVYH (61 aa). The SH2 domain maps to 84–175; that stretch reads WLFEGLGRDK…GLCCVLTTPC (92 aa). Positions 190-281 are SLA C-terminal; that stretch reads CTSPGSPVTL…FFSAPQYFED (92 aa). Ser258 is modified (phosphoserine). At Tyr278 the chain carries Phosphotyrosine.

In terms of assembly, homodimer. Interacts with phosphorylated CBL, SYK and LAT. Homodimerization and interaction with phosphorylated CBL occurs via its C-terminal domain. Interacts with PDGFRB and EPHA2. Interacts with phosphorylated proteins ZAP70; CD3Z; VAV1 and LCP2 via its SH2 domain. In terms of tissue distribution, predominantly expressed in lymphoid tissues. Highly expressed in spleen, thymus and lymph nodes. Weakly expressed in lung and brain. Expressed in T-cells and at low level in B-cells.

The protein resides in the cytoplasm. It localises to the endosome. Functionally, adapter protein, which negatively regulates T-cell receptor (TCR) signaling. Inhibits T-cell antigen-receptor induced activation of nuclear factor of activated T-cells. Involved in the negative regulation of positive selection and mitosis of T-cells. May act by linking signaling proteins such as ZAP70 with CBL, leading to a CBL dependent degradation of signaling proteins. This is Src-like-adapter (Sla) from Mus musculus (Mouse).